The primary structure comprises 258 residues: UPF0758 protein BamMC406_2419 (258 aa).

Residues 13 to 42 form a disordered region; that stretch reads CRDPADAPAAPARHTGPARPRKRRPRNWKP. The span at 31–42 shows a compositional bias: basic residues; it reads RPRKRRPRNWKP. Residues 136–258 form the MPN domain; sequence QIDSPGAVED…TFSFARAGWL (123 aa). Residues histidine 207, histidine 209, and aspartate 220 each coordinate Zn(2+). A JAMM motif motif is present at residues 207-220; the sequence is HNHPSGAVQPSAED.

This sequence belongs to the UPF0758 family.

This is UPF0758 protein BamMC406_2419 from Burkholderia ambifaria (strain MC40-6).